The sequence spans 374 residues: Phospho-2-dehydro-3-deoxyheptonate aldolase AMT16 (374 aa).

It belongs to the class-I DAHP synthase family.

It catalyses the reaction D-erythrose 4-phosphate + phosphoenolpyruvate + H2O = 7-phospho-2-dehydro-3-deoxy-D-arabino-heptonate + phosphate. The protein operates within mycotoxin biosynthesis. Its function is as follows. Nonribosomal peptide synthetase; part of the gene clusters that mediate the biosynthesis of AM-toxins, host-selective toxins (HSTs) causing Alternaria blotch on apple, a worldwide distributed disease. AM-toxins are cyclic depsipeptides containing the 3 residues 2-hydroxy-isovaleric acid (2-HIV), dehydroalanine, L-alanine which are common for all 3 AM-toxins I to III. The fourth precursor is L-alpha-amino-methoxyphenyl-valeric acid (L-Amv) for AM-toxin I, L-alpha-amino-phenyl-valeric acid (L-Apv) for AM-toxin II, and L-alpha-amino-hydroxyphenyl-valeric acid (L-Ahv) for AM-toxin III. AM-toxins have two target sites for affecting susceptible apple cells; they cause invagination of the plasma membrane and electrolyte loss and chloroplast disorganization. The non-ribosomal peptide synthetase AMT1 contains 4 catalytic modules and is responsible for activation of each residue in AM-toxin. The aldo-keto reductase AMT2 catalyzes the conversion of 2-keto-isovaleric acid (2-KIV) to 2-hydroxy-isovaleric acid (2-HIV), one of the precursor residues incorporated by AMT1 during AM-toxin biosynthesis, by reduction of its ketone to an alcohol. The cytochrome P450 monooxygenase AMT3 and the thioesterase AMT4 are also important for AM-toxin production, but their exact function within the AM-toxin biosynthesis are not known yet. Up to 21 proteins (including AMT1 to AMT4) are predicted to be involved in AM-toxin biosynthesis since their expression ishighly up-regulated in AM-toxin-producing cultures. This Alternaria alternata (Alternaria rot fungus) protein is Phospho-2-dehydro-3-deoxyheptonate aldolase AMT16.